Here is a 201-residue protein sequence, read N- to C-terminus: Recombination protein RecR (201 aa).

The C4-type zinc-finger motif lies at 60–75; it reads CSCCGNVDTSDPCTIC. Residues 83-178 form the Toprim domain; that stretch reads ATLIVVEDVS…RVTRLAHGVP (96 aa).

The protein belongs to the RecR family.

Its function is as follows. May play a role in DNA repair. It seems to be involved in an RecBC-independent recombinational process of DNA repair. It may act with RecF and RecO. In Brucella melitensis biotype 2 (strain ATCC 23457), this protein is Recombination protein RecR.